Reading from the N-terminus, the 248-residue chain is 14-3-3 protein homolog 2 (248 aa).

It belongs to the 14-3-3 family.

The chain is 14-3-3 protein homolog 2 from Echinococcus multilocularis (Fox tapeworm).